The primary structure comprises 347 residues: Haptoglobin (347 aa).

Positions 1–18 (MSDLGAVVALLLWGQLFA) are cleaved as a signal peptide. Positions 31–88 (DGCPKPPMIANGYVEHLVRYQCKNYYRLRTEGDGVYTLNNEKQWTNKAVGDKLPECEA) constitute a Sushi domain. 2 disulfides stabilise this stretch: Cys-52–Cys-86 and Cys-90–Cys-207. Residues 103-347 (ILGGHLDAKG…DWVQKTIAEN (245 aa)) form a serine protease region. Asn-125, Asn-148, Asn-152, Asn-182, and Asn-232 each carry an N-linked (GlcNAc...) asparagine glycan. Cystine bridges form between Cys-250–Cys-281 and Cys-292–Cys-322. The tract at residues 259-264 (VPEKKT) is interaction with CD163.

This sequence belongs to the peptidase S1 family. As to quaternary structure, tetramer of two alpha and two beta chains; disulfide-linked. The hemoglobin/haptoglobin complex is composed of a haptoglobin dimer bound to two hemoglobin alpha-beta dimers. Interacts with CD163. Interacts with ERGIC3. In terms of tissue distribution, expressed by the liver and secreted in plasma.

It is found in the secreted. As a result of hemolysis, hemoglobin is found to accumulate in the kidney and is secreted in the urine. Haptoglobin captures, and combines with free plasma hemoglobin to allow hepatic recycling of heme iron and to prevent kidney damage. Haptoglobin also acts as an antioxidant, has antibacterial activity and plays a role in modulating many aspects of the acute phase response. Hemoglobin/haptoglobin complexes are rapidly cleared by the macrophage CD163 scavenger receptor expressed on the surface of liver Kupfer cells through an endocytic lysosomal degradation pathway. This chain is Haptoglobin (HP), found in Papio hamadryas (Hamadryas baboon).